The chain runs to 280 residues: Tobamovirus multiplication protein 2A (280 aa).

At 1–13 the chain is on the cytoplasmic side; the sequence is MACRGCLECLLKL. The helical transmembrane segment at 14-34 threads the bilayer; the sequence is LNFLLAVAGLGMIGYGIYLFV. The Extracellular segment spans residues 35–78; it reads EYKRVTDNSVTFDLTNGDQSYVSFGRPILMAVSLSSNIFDNLPK. The chain crosses the membrane as a helical span at residues 79 to 99; that stretch reads AWFIYLFIGIGVALFVISCCG. Topologically, residues 100 to 113 are cytoplasmic; it reads CVGTCSRSVCCLSC. Residues 114–134 traverse the membrane as a helical segment; sequence YSLLLILLILVELGFAAFIFF. The Extracellular portion of the chain corresponds to 135–162; it reads DNSWRDELPSDRTGNFDTIYNFLRENWK. Residues 163 to 183 form a helical membrane-spanning segment; sequence IVRWVALGAVVFEALLFLLAL. At 184–280 the chain is on the cytoplasmic side; sequence MVRAANTPAE…NEEKGRCTIM (97 aa). Ser-196 and Ser-233 each carry phosphoserine. A disordered region spans residues 258–280; that stretch reads SESHRFQQMPAQPNEEKGRCTIM. Basic and acidic residues predominate over residues 271–280; it reads NEEKGRCTIM.

This sequence belongs to the tetraspanin (TM4SF) family. As to quaternary structure, homodimer. Constituent of tobamovirus replication complex. Interacts with TOM1. In terms of tissue distribution, expressed in rosette leaves.

The protein localises to the vacuole membrane. Its function is as follows. Necessary for the efficient intracellular multiplication of tobamoviruses, being a component of the replication complex. This is Tobamovirus multiplication protein 2A (TOM2A) from Arabidopsis thaliana (Mouse-ear cress).